A 719-amino-acid polypeptide reads, in one-letter code: Polyribonucleotide nucleotidyltransferase (719 aa).

Mg(2+) is bound by residues aspartate 507 and aspartate 513. Residues 573-633 enclose the KH domain; the sequence is PKLELFSVDP…EQIKAAKDYI (61 aa). The 62-residue stretch at 658–719 folds into the S1 motif domain; that stretch reads GQEFQGIVKK…NGKISVDLCE (62 aa).

Belongs to the polyribonucleotide nucleotidyltransferase family. It depends on Mg(2+) as a cofactor.

The protein localises to the cytoplasm. The enzyme catalyses RNA(n+1) + phosphate = RNA(n) + a ribonucleoside 5'-diphosphate. Its function is as follows. Involved in mRNA degradation. Catalyzes the phosphorolysis of single-stranded polyribonucleotides processively in the 3'- to 5'-direction. The chain is Polyribonucleotide nucleotidyltransferase from Campylobacter jejuni subsp. jejuni serotype O:2 (strain ATCC 700819 / NCTC 11168).